Reading from the N-terminus, the 252-residue chain is Ubiquitin carboxyl-terminal hydrolase isozyme L1 (252 aa).

Met-1 carries the post-translational modification N-acetylmethionine. Residues 2 to 250 (QLKPMEINPE…VRFSAVALCK (249 aa)) enclose the UCH catalytic domain. Residues 5–10 (PMEINP) form an interaction with ubiquitin region. Cys-119 acts as the Nucleophile in catalysis. Position 154 is a phosphoserine (Ser-154). His-190 functions as the Proton donor in the catalytic mechanism. The interval 240–245 (EVRFSA) is interaction with ubiquitin. Cys-249 carries S-farnesyl cysteine lipidation. A propeptide spans 250–252 (KAA) (removed in mature form).

It belongs to the peptidase C12 family. Monomer. Homodimer. Interacts with COPS5 and SNCA. In terms of processing, O-glycosylated. As to expression, neurons and cells of the diffuse neuroendocrine system and their tumors.

It localises to the cytoplasm. The protein resides in the endoplasmic reticulum membrane. The enzyme catalyses Thiol-dependent hydrolysis of ester, thioester, amide, peptide and isopeptide bonds formed by the C-terminal Gly of ubiquitin (a 76-residue protein attached to proteins as an intracellular targeting signal).. Its function is as follows. Ubiquitin-protein hydrolase involved both in the processing of ubiquitin precursors and of ubiquitinated proteins. This enzyme is a thiol protease that recognizes and hydrolyzes a peptide bond at the C-terminal glycine of ubiquitin. Also binds to free monoubiquitin and may prevent its degradation in lysosomes. The homodimer may have ATP-independent ubiquitin ligase activity. This is Ubiquitin carboxyl-terminal hydrolase isozyme L1 (UCHL1) from Bos taurus (Bovine).